Reading from the N-terminus, the 299-residue chain is Ribosomal RNA small subunit methyltransferase A (299 aa).

6 residues coordinate S-adenosyl-L-methionine: asparagine 44, valine 46, glycine 71, glutamate 92, aspartate 122, and asparagine 141.

Belongs to the class I-like SAM-binding methyltransferase superfamily. rRNA adenine N(6)-methyltransferase family. RsmA subfamily.

Its subcellular location is the cytoplasm. It catalyses the reaction adenosine(1518)/adenosine(1519) in 16S rRNA + 4 S-adenosyl-L-methionine = N(6)-dimethyladenosine(1518)/N(6)-dimethyladenosine(1519) in 16S rRNA + 4 S-adenosyl-L-homocysteine + 4 H(+). Functionally, specifically dimethylates two adjacent adenosines (A1518 and A1519) in the loop of a conserved hairpin near the 3'-end of 16S rRNA in the 30S particle. May play a critical role in biogenesis of 30S subunits. This is Ribosomal RNA small subunit methyltransferase A from Rhodococcus erythropolis (strain PR4 / NBRC 100887).